A 349-amino-acid chain; its full sequence is N-acetyl-gamma-glutamyl-phosphate reductase (349 aa).

C152 is an active-site residue.

This sequence belongs to the NAGSA dehydrogenase family. Type 1 subfamily.

Its subcellular location is the cytoplasm. The catalysed reaction is N-acetyl-L-glutamate 5-semialdehyde + phosphate + NADP(+) = N-acetyl-L-glutamyl 5-phosphate + NADPH + H(+). It participates in amino-acid biosynthesis; L-arginine biosynthesis; N(2)-acetyl-L-ornithine from L-glutamate: step 3/4. In terms of biological role, catalyzes the NADPH-dependent reduction of N-acetyl-5-glutamyl phosphate to yield N-acetyl-L-glutamate 5-semialdehyde. The polypeptide is N-acetyl-gamma-glutamyl-phosphate reductase (Clavibacter sepedonicus (Clavibacter michiganensis subsp. sepedonicus)).